The sequence spans 121 residues: Small ribosomal subunit protein bS6 (121 aa).

It belongs to the bacterial ribosomal protein bS6 family.

In terms of biological role, binds together with bS18 to 16S ribosomal RNA. The chain is Small ribosomal subunit protein bS6 (rpsF) from Rickettsia prowazekii (strain Madrid E).